Consider the following 131-residue polypeptide: Profilin-1 (131 aa).

The protein belongs to the profilin family. As to quaternary structure, occurs in many kinds of cells as a complex with monomeric actin in a 1:1 ratio. As to expression, expressed at low levels roots, leaves, stems, flowers and siliques. Expressed in leaf epidermal cells, trichomes and stem epidermal cells. Detected in phloem exudates (at protein level).

The protein resides in the cytoplasm. Its subcellular location is the cytoskeleton. Functionally, binds to actin monomers and regulates the organization of the actin cytoskeleton. At high concentrations, profilin prevents the polymerization of actin, whereas it enhances it at low concentrations. At low concentrations, associates with the poly-proline motif of formins to enhance actin filament elongation rate. Binds ACT1, ACT7 and ACT11 and inhibits actin polymerization. Coordinates the stochastic dynamic properties of actin filaments by modulating formin-mediated actin nucleation and assembly during axial cell expansion. Binds G-actin and poly-L-proline in vitro. Inhibits cell growth of various pathogenic fungal strains. May play a role as antifungal proteins in the defense system against fungal pathogen attacks. The chain is Profilin-1 from Arabidopsis thaliana (Mouse-ear cress).